We begin with the raw amino-acid sequence, 95 residues long: Blastocyst protein 4 (95 aa).

The first 20 residues, 1–20, serve as a signal peptide directing secretion; sequence MGAVFAIIGGFALDSPILRL.

In Oryctolagus cuniculus (Rabbit), this protein is Blastocyst protein 4.